The primary structure comprises 281 residues: MILTKAQYDEIAQCLVSVPPTRQSLRKLKQRFPSQSQATLLSIFSQEYQKHIKRTHAKHHTSEAIESYYQRYLNGVVKNGAAPVLLDLANEVDYAPSLMARLILERFLQEHEETPPSKSIINSMLRDPSQIPDGVLANQVYQCIVNDCCYGPLVDCIKHAIGHEHEVLLRDLLLEKNLSFLDEDQLRAKGYDKTPDFILQVPVAVEGHIIHWIESKASFGDECSHHAYLHDQFWSYWNRFGPGLVIYWYGFIQELDCNRERGILLKACFPTNIVTLCHSIA.

Thr114 carries the post-translational modification Phosphothreonine.

It is found in the nucleus. The protein resides in the cytoplasm. Plays a role in erythroid cell differentiation. The polypeptide is CDAN1-interacting nuclease 1 (Homo sapiens (Human)).